A 260-amino-acid polypeptide reads, in one-letter code: RNA polymerase sigma-G factor (260 aa).

A recognizes anti-sigma-G factor Gin (csfB) region spans residues 1–71 (MSRNKVEICG…GEYVDDLFQV (71 aa)). A Polymerase core binding motif is present at residues 67 to 80 (DLFQVGCIGLMKSI). Positions 229-248 (QMEVAEEIGISQAQVSRLEK) form a DNA-binding region, H-T-H motif.

This sequence belongs to the sigma-70 factor family. Interacts with anti-sigma-G factor Gin (csfB).

Its activity is regulated as follows. Activity repressed by anti-sigma-G factor Gin (csfB) and Lon protease during the early stages of forespore development. When both Gin and sigma-G are expressed in E.coli Gin inhibits sigma-G activity, strongly suggesting Gin inhibits by direct physical interaction. Its function is as follows. Sigma factors are initiation factors that promote the attachment of RNA polymerase to specific initiation sites and are then released. This sigma factor is responsible for the expression of sporulation specific genes in the forespore. The protein is RNA polymerase sigma-G factor (sigG) of Bacillus subtilis (strain 168).